Reading from the N-terminus, the 584-residue chain is Protein FAM117B (584 aa).

Residues 1–214 (MSQRVRRNGS…SSSSSIIRRT (214 aa)) are disordered. S10 carries the phosphoserine modification. A compositionally biased stretch (gly residues) spans 53–79 (TRGGGGGGNNGGNGGASGPSGGGGSGG). The segment covering 80-90 (PRTASRSTSPT) has biased composition (low complexity). S102 is modified (phosphoserine). Positions 114 to 132 (TSTRGTSPTRGTAPGARSS) are enriched in low complexity. Residues 133 to 142 (PPRPQPPPPL) show a composition bias toward pro residues. The segment covering 145 to 154 (TVSSPSSSPT) has biased composition (polar residues). Residues 204–214 (SSSSSSIIRRT) show a composition bias toward low complexity. 4 positions are modified to phosphoserine: S206, S215, S216, and S268. 2 disordered regions span residues 227–461 (GHWP…SYMF) and 551–584 (STNT…EAEG). Basic residues predominate over residues 287–297 (RSKHSSRHHRD). Position 340 is a phosphoserine (S340). Residues 350–361 (IIIKETGEKEEQ) show a composition bias toward basic and acidic residues. Residues 379–392 (QRSSSTRSIDTQTP) are compositionally biased toward polar residues. S386 is modified (phosphoserine). Low complexity predominate over residues 399–412 (SNNSSRSQSVSPTS). A phosphoserine mark is found at S444 and S452.

The protein is Protein FAM117B (Fam117b) of Mus musculus (Mouse).